Here is a 172-residue protein sequence, read N- to C-terminus: Small ribosomal subunit protein uS5 (172 aa).

Residues 17–80 (LREKMISVNR…DEARRKMVKV (64 aa)) enclose the S5 DRBM domain.

Belongs to the universal ribosomal protein uS5 family. Part of the 30S ribosomal subunit. Contacts proteins S4 and S8.

With S4 and S12 plays an important role in translational accuracy. Its function is as follows. Located at the back of the 30S subunit body where it stabilizes the conformation of the head with respect to the body. This chain is Small ribosomal subunit protein uS5, found in Cupriavidus metallidurans (strain ATCC 43123 / DSM 2839 / NBRC 102507 / CH34) (Ralstonia metallidurans).